The chain runs to 550 residues: Coiled-coil domain-containing protein 60 (550 aa).

The interval 1-21 (MTKVPATKKLQSSPNSGAVRP) is disordered. Positions 71–98 (AILREETAKKKKQQQLQKLKEEERNKFQ) form a coiled coil. 2 disordered regions span residues 219–293 (KFKI…EPLY) and 336–367 (AYKE…KKSK). Low complexity predominate over residues 235–256 (RGSTLSLSRASGGSSPQSSMIS). A compositionally biased stretch (polar residues) spans 336–345 (AYKEMQTTLK).

The protein is Coiled-coil domain-containing protein 60 (CCDC60) of Homo sapiens (Human).